Here is a 500-residue protein sequence, read N- to C-terminus: Cytochrome P450 71D13 (500 aa).

A helical; Signal-anchor for type II membrane protein transmembrane segment spans residues 3-23 (LQISSAIIILVVTYTISLLII). Residue Cys-439 coordinates heme.

This sequence belongs to the cytochrome P450 family. It depends on heme as a cofactor.

It localises to the endoplasmic reticulum membrane. It catalyses the reaction (4S)-limonene + reduced [NADPH--hemoprotein reductase] + O2 = (1S,6R)-isopiperitenol + oxidized [NADPH--hemoprotein reductase] + H2O + H(+). Functionally, hydroxylates (-)-(4S)-limonene to (-)-trans-isopiperitenol, a precursor of (-)-menthol, responsible for the cooling sensation of peppermint. The protein is Cytochrome P450 71D13 (CYP71D13) of Mentha piperita (Peppermint).